The primary structure comprises 367 residues: Spermidine/putrescine import ATP-binding protein PotA (367 aa).

The 231-residue stretch at 10 to 240 (IEFKNVSLDY…PINHFVANFI (231 aa)) folds into the ABC transporter domain. ATP is bound at residue 42 to 49 (GPSGSGKS).

This sequence belongs to the ABC transporter superfamily. Spermidine/putrescine importer (TC 3.A.1.11.1) family. The complex is composed of two ATP-binding proteins (PotA), two transmembrane proteins (PotB and PotC) and a solute-binding protein (PotD).

Its subcellular location is the cell membrane. It carries out the reaction ATP + H2O + polyamine-[polyamine-binding protein]Side 1 = ADP + phosphate + polyamineSide 2 + [polyamine-binding protein]Side 1.. Functionally, part of the ABC transporter complex PotABCD involved in spermidine/putrescine import. Responsible for energy coupling to the transport system. This is Spermidine/putrescine import ATP-binding protein PotA from Oenococcus oeni (strain ATCC BAA-331 / PSU-1).